The primary structure comprises 329 residues: Methionyl-tRNA formyltransferase (329 aa).

118–121 serves as a coordination point for (6S)-5,6,7,8-tetrahydrofolate; the sequence is SLLP.

Belongs to the Fmt family.

The enzyme catalyses L-methionyl-tRNA(fMet) + (6R)-10-formyltetrahydrofolate = N-formyl-L-methionyl-tRNA(fMet) + (6S)-5,6,7,8-tetrahydrofolate + H(+). Functionally, attaches a formyl group to the free amino group of methionyl-tRNA(fMet). The formyl group appears to play a dual role in the initiator identity of N-formylmethionyl-tRNA by promoting its recognition by IF2 and preventing the misappropriation of this tRNA by the elongation apparatus. This Corynebacterium urealyticum (strain ATCC 43042 / DSM 7109) protein is Methionyl-tRNA formyltransferase.